A 387-amino-acid chain; its full sequence is Methylthioribose-1-phosphate isomerase (387 aa).

The Proton donor role is filled by Asp257.

Belongs to the eIF-2B alpha/beta/delta subunits family. MtnA subfamily.

The protein resides in the cytoplasm. It localises to the nucleus. The enzyme catalyses 5-(methylsulfanyl)-alpha-D-ribose 1-phosphate = 5-(methylsulfanyl)-D-ribulose 1-phosphate. Its pathway is amino-acid biosynthesis; L-methionine biosynthesis via salvage pathway; L-methionine from S-methyl-5-thio-alpha-D-ribose 1-phosphate: step 1/6. Catalyzes the interconversion of methylthioribose-1-phosphate (MTR-1-P) into methylthioribulose-1-phosphate (MTRu-1-P). The chain is Methylthioribose-1-phosphate isomerase (mri1) from Neosartorya fischeri (strain ATCC 1020 / DSM 3700 / CBS 544.65 / FGSC A1164 / JCM 1740 / NRRL 181 / WB 181) (Aspergillus fischerianus).